A 434-amino-acid chain; its full sequence is MVFKNSIDLYKKAVELIPGGVNSPVRAFKSVNREAPIFIKKGQGAKIWDEDDNEYIDYICSWGPLILGHNHPKVIEEVKKIIENGSSYGLPTKYEVDLAELIVDIVPSIEKVRLTTSGTEATMSAVRLARAYTQRNKILKFEGCYHGHSDALLVKSGSGLLTEGYQDSNGITDGVLKDTLTLPFGDIEKVKEILKNKDVACVIVEPIPANMGLIETHKEFLQGLGKVTEKTGTILIFDEVISGFRLALGGAQEFFGITPDLTTLGKIIGGGYPVGAFGGKKEIMDLVAPVGRVYHAGTLSGNPIASKAGFATISYLKENPNIYKELEEKTNYLIDNIEILAKKYSVNVCVNSMGSLFTIFFVDIDKVENLEDSLKSNTENFSIYFNTMLENGIVIPPSQFEAHFLSMAHTKKELNRTLEVIEMAFKKIGEKSGK.

The residue at position 266 (K266) is an N6-(pyridoxal phosphate)lysine.

The protein belongs to the class-III pyridoxal-phosphate-dependent aminotransferase family. HemL subfamily. Homodimer. The cofactor is pyridoxal 5'-phosphate.

It is found in the cytoplasm. The catalysed reaction is (S)-4-amino-5-oxopentanoate = 5-aminolevulinate. The protein operates within porphyrin-containing compound metabolism; protoporphyrin-IX biosynthesis; 5-aminolevulinate from L-glutamyl-tRNA(Glu): step 2/2. The sequence is that of Glutamate-1-semialdehyde 2,1-aminomutase from Fusobacterium nucleatum subsp. nucleatum (strain ATCC 25586 / DSM 15643 / BCRC 10681 / CIP 101130 / JCM 8532 / KCTC 2640 / LMG 13131 / VPI 4355).